The chain runs to 134 residues: Small ribosomal subunit protein uS8c (134 aa).

This sequence belongs to the universal ribosomal protein uS8 family. As to quaternary structure, part of the 30S ribosomal subunit.

The protein localises to the plastid. It is found in the chloroplast. Its function is as follows. One of the primary rRNA binding proteins, it binds directly to 16S rRNA central domain where it helps coordinate assembly of the platform of the 30S subunit. The sequence is that of Small ribosomal subunit protein uS8c (rps8) from Gossypium hirsutum (Upland cotton).